The primary structure comprises 287 residues: BURP domain-containing protein 2 (287 aa).

Residues 1–21 form the signal peptide; sequence MARSLAALLLLLVAAAGASHA. A BURP domain is found at 67 to 287; the sequence is FFLEKDLFPG…PQDDMLWVRN (221 aa).

In terms of tissue distribution, expressed in shoot.

This Oryza sativa subsp. japonica (Rice) protein is BURP domain-containing protein 2 (BURP2).